The following is a 1423-amino-acid chain: Protein phosphatase Slingshot homolog 2 (1423 aa).

The disordered stretch occupies residues methionine 1–isoleucine 37. Positions serine 9 to proline 18 are enriched in low complexity. A phosphoserine mark is found at serine 17, serine 25, and serine 36. The region spanning glutamate 248 to glycine 303 is the DEK-C domain. A Tyrosine-protein phosphatase domain is found at serine 307–alanine 448. Cysteine 392 acts as the Phosphocysteine intermediate in catalysis. Serine 461, serine 487, serine 534, serine 631, and serine 633 each carry phosphoserine. Disordered stretches follow at residues threonine 617–glutamate 641, glutamine 664–asparagine 684, proline 696–alanine 728, glutamate 797–proline 825, glutamate 840–tyrosine 862, leucine 877–valine 954, phenylalanine 962–glutamate 981, threonine 1019–leucine 1041, serine 1070–serine 1108, and threonine 1144–serine 1179. A compositionally biased stretch (pro residues) spans lysine 621–glutamine 635. The span at glutamine 664–glycine 680 shows a compositional bias: basic and acidic residues. The span at threonine 889–serine 904 shows a compositional bias: polar residues. Residues proline 910–lysine 932 show a composition bias toward basic and acidic residues. Over residues glutamate 941 to threonine 953 the composition is skewed to polar residues. The segment covering threonine 1019–glutamate 1034 has biased composition (polar residues). The span at threonine 1144–serine 1172 shows a compositional bias: polar residues. Phosphoserine is present on serine 1217. Threonine 1422 carries the post-translational modification Phosphothreonine.

This sequence belongs to the protein-tyrosine phosphatase family. As to quaternary structure, interacts with filamentous actin.

Its subcellular location is the cytoplasm. It localises to the cytoskeleton. It is found in the cell junction. The protein localises to the focal adhesion. The protein resides in the cytoplasmic vesicle. Its subcellular location is the secretory vesicle. It localises to the acrosome. It carries out the reaction O-phospho-L-tyrosyl-[protein] + H2O = L-tyrosyl-[protein] + phosphate. The enzyme catalyses O-phospho-L-seryl-[protein] + H2O = L-seryl-[protein] + phosphate. The catalysed reaction is O-phospho-L-threonyl-[protein] + H2O = L-threonyl-[protein] + phosphate. Functionally, protein phosphatase which regulates actin filament dynamics. Dephosphorylates and activates the actin binding/depolymerizing factor cofilin, which subsequently binds to actin filaments and stimulates their disassembly. Inhibitory phosphorylation of cofilin is mediated by LIMK1, which may also be dephosphorylated and inactivated by this protein. Required for spermatogenesis. Involved in acrosome biogenesis, probably by regulating cofilin-mediated actin cytoskeleton remodeling during proacrosomal vesicle fusion and/or Golgi to perinuclear vesicle trafficking. This chain is Protein phosphatase Slingshot homolog 2 (SSH2), found in Homo sapiens (Human).